The primary structure comprises 66 residues: Large ribosomal subunit protein bL35 (66 aa).

A compositionally biased stretch (basic residues) spans 1–26 (MPKMKTHRGSAKRFKKTGSGKLKRSH). Residues 1–48 (MPKMKTHRGSAKRFKKTGSGKLKRSHAYTSHLFANKSQKQKRKLRKSA) form a disordered region.

It belongs to the bacterial ribosomal protein bL35 family.

The chain is Large ribosomal subunit protein bL35 from Bacillus licheniformis (strain ATCC 14580 / DSM 13 / JCM 2505 / CCUG 7422 / NBRC 12200 / NCIMB 9375 / NCTC 10341 / NRRL NRS-1264 / Gibson 46).